Reading from the N-terminus, the 216-residue chain is Ornithine decarboxylase antizyme 1 (216 aa).

The protein belongs to the ODC antizyme family. Interacts with ODC1 and thereby sterically blocks ODC homodimerization.

Functionally, ornithine decarboxylase (ODC) antizyme protein that negatively regulates ODC activity and intracellular polyamine biosynthesis and uptake in response to increased intracellular polyamine levels. Binds to ODC monomers, inhibiting the assembly of the functional ODC homodimer, and targets the monomers for ubiquitin-independent proteolytic destruction by the 26S proteasome. This chain is Ornithine decarboxylase antizyme 1 (oaz1), found in Xenopus laevis (African clawed frog).